We begin with the raw amino-acid sequence, 288 residues long: F420-non-reducing hydrogenase vhu subunit G (288 aa).

This sequence belongs to the [NiFe]/[NiFeSe] hydrogenase small subunit family. In terms of assembly, the F420-non-reducing hydrogenase vhu is composed of four subunits; VhuA, VhuD, VhuG and VhuU.

The polypeptide is F420-non-reducing hydrogenase vhu subunit G (vhuG) (Methanocaldococcus jannaschii (strain ATCC 43067 / DSM 2661 / JAL-1 / JCM 10045 / NBRC 100440) (Methanococcus jannaschii)).